A 1381-amino-acid chain; its full sequence is Serine-aspartate repeat-containing protein D (1381 aa).

The signal sequence occupies residues 1–35 (MLNRENKTAITRKGMVSNRLNKFSIRKYTVGTASI). The YSIRK-G/S signaling motif signature appears at 23–34 (FSIRKYTVGTAS). Residues 36–568 (LVGTTLIFGL…NNQSGGAGQE (533 aa)) form a ligand binding A region region. The segment at 54 to 185 (ESTNKELNEA…NKKVDAKTES (132 aa)) is disordered. Composition is skewed to polar residues over residues 62-71 (EATTSASDNQ) and 94-108 (EMVS…SNGN). Basic and acidic residues predominate over residues 130–145 (KSDEQASPKSTNEDLN). Polar residues-rich tracts occupy residues 146–155 (TKQTISNQEA) and 163–173 (NKSVVNVQPTN). The span at 174 to 183 (EENKKVDAKT) shows a compositional bias: basic and acidic residues. 5 CNA-B domains span residues 569-680 (VYKI…IYKP), 681-791 (KYNL…YKTP), 792-901 (KYNL…FYKP), 902-1012 (TYNL…YKTP), and 1013-1123 (KYSL…EEET). Disordered regions lie at residues 857 to 883 (ETPS…TSTT), 972 to 992 (YTPT…GLTT), and 1078 to 1357 (EKPA…SNNA). 2 stretches are compositionally biased toward polar residues: residues 860-869 (SGYTPTQVGS) and 972-981 (YTPTSVTSGN). Composition is skewed to acidic residues over residues 1091 to 1101 (TEDDKDADGGE), 1118 to 1134 (YYEE…DSDS), 1142 to 1164 (SDSD…DSDS), and 1172 to 1320 (SDSD…DSDS). Positions 1344–1348 (LPETG) match the LPXTG sorting signal motif. Threonine 1347 carries the post-translational modification Pentaglycyl murein peptidoglycan amidated threonine. The propeptide at 1348 to 1381 (GNENSGSNNATLFGGLFAALGSLLLFGRRKKQNK) is removed by sortase.

The protein belongs to the serine-aspartate repeat-containing protein (SDr) family. Interacts with host DSG1; this interaction increases S.aureus adherence to keratinocytes.

Its subcellular location is the secreted. It localises to the cell wall. Functionally, cell surface-associated calcium-binding protein which plays an important role in adhesion and pathogenesis. Mediates interactions with components of the extracellular matrix such as host DSG1 to promote bacterial adhesion to host cells. Contributes to the resistance to killing by innate immune components such as neutrophils present in blood and thus attenuates bacterial clearance. The chain is Serine-aspartate repeat-containing protein D (sdrD) from Staphylococcus aureus (strain USA300).